Consider the following 475-residue polypeptide: MLCRRRRVGAAVRWLSRLAPPAPAEADPVVVRVDGSNVARLGKPKPGPRPRQLLSLPPFPGGGDGDPLPGRKAAAPRRVTAVSWVKHYLADVPQEVVQAHFNKRLVYSECSDHEVSVETIKSQKHHLKKIKHNDVMEPGMRIHLPVSVAEGEIKKRYETIPTATLHPNKDEIEYLRRLVIHKDSAILVLNKPPKVPMKGNLPVHNSMDVLAAAALSYGNEEGPKLVHRLDRESSGLLLFGRTKESFTRLHWLFTSVNLAKTNSQVWNAACEAYMQRYWALVIGTPKEREGIISAPLSKVLLDDGKAERVILAHPSGIDGAQEAVTAYRVMGPTIHGCSWIELRPLTGRKHQLRVHCAEALGTPIVGDYKYGWFVHQRWKQNPQPDFEPFTGEPYKLRRPEGLEIQKGSVLSKVPLLHLHCREMVIPNIAKFLSSNGEWHENGAPWSKEKPNLLRFIAPMPAHMKISWNIMSSYLV.

The N-terminal 15 residues, Met1–Leu15, are a transit peptide targeting the mitochondrion. Positions Arg40–Ala74 are disordered. The S4 RNA-binding domain maps to Ala90–Ile160. Asp230 is an active-site residue.

The protein belongs to the pseudouridine synthase RluA family.

It is found in the mitochondrion. The enzyme catalyses a uridine in RNA = a pseudouridine in RNA. In Oryza sativa subsp. japonica (Rice), this protein is RNA pseudouridine synthase 3, mitochondrial.